Reading from the N-terminus, the 240-residue chain is Biosynthetic peptidoglycan transglycosylase (240 aa).

A helical transmembrane segment spans residues 12 to 31; that stretch reads ALLWFAGGSVLLVLVFRFVP.

The protein belongs to the glycosyltransferase 51 family.

It is found in the cell inner membrane. The enzyme catalyses [GlcNAc-(1-&gt;4)-Mur2Ac(oyl-L-Ala-gamma-D-Glu-L-Lys-D-Ala-D-Ala)](n)-di-trans,octa-cis-undecaprenyl diphosphate + beta-D-GlcNAc-(1-&gt;4)-Mur2Ac(oyl-L-Ala-gamma-D-Glu-L-Lys-D-Ala-D-Ala)-di-trans,octa-cis-undecaprenyl diphosphate = [GlcNAc-(1-&gt;4)-Mur2Ac(oyl-L-Ala-gamma-D-Glu-L-Lys-D-Ala-D-Ala)](n+1)-di-trans,octa-cis-undecaprenyl diphosphate + di-trans,octa-cis-undecaprenyl diphosphate + H(+). It functions in the pathway cell wall biogenesis; peptidoglycan biosynthesis. Functionally, peptidoglycan polymerase that catalyzes glycan chain elongation from lipid-linked precursors. The polypeptide is Biosynthetic peptidoglycan transglycosylase (Pseudomonas fluorescens (strain Pf0-1)).